A 197-amino-acid polypeptide reads, in one-letter code: ATP synthase protein MI25 (197 aa).

A helical transmembrane segment spans residues 30 to 50 (ISIYNEEMIVARCFIGFLIFS).

Belongs to the ATPase protein MI25 family. F-type ATPases have 2 components, CF(1) - the catalytic core - and CF(0) - the membrane proton channel. CF(1) has five subunits: alpha(3), beta(3), gamma(1), delta(1), epsilon(1). CF(0) has three main subunits: a, b and c.

It localises to the mitochondrion membrane. In terms of biological role, this is one of the chains of the nonenzymatic component (CF(0) subunit) of the mitochondrial ATPase complex. This is ATP synthase protein MI25 from Oryza sativa subsp. indica (Rice).